We begin with the raw amino-acid sequence, 184 residues long: Mitochondrial import inner membrane translocase subunit TIM22 (184 aa).

The segment at 1–26 (MSLWGVYTGPQPPKKPLQEMTQEEQA) is disordered. 2 disulfide bridges follow: Cys-40-Cys-118 and Cys-137-Cys-156. 2 helical membrane passes run 45–65 (VMAG…MASM) and 151–171 (AALV…MYLN).

It belongs to the Tim17/Tim22/Tim23 family. In terms of assembly, component of the TIM22 complex, whose core is composed of TIM22 and TIM54, associated with the 70 kDa heterohexamer composed of TIM9 and TIM10 (or TIM8 and TIM13).

The protein resides in the mitochondrion inner membrane. Functionally, essential core component of the TIM22 complex, a complex that mediates the import and insertion of multi-pass transmembrane proteins into the mitochondrial inner membrane. In the TIM22 complex, it constitutes the voltage-activated and signal-gated channel. Forms a twin-pore translocase that uses the membrane potential as external driving force in 2 voltage-dependent steps. The polypeptide is Mitochondrial import inner membrane translocase subunit TIM22 (Candida albicans (strain SC5314 / ATCC MYA-2876) (Yeast)).